We begin with the raw amino-acid sequence, 595 residues long: Isoprene synthase, chloroplastic (595 aa).

The N-terminal 37 residues, 1-37 (MATELLCLHRPISLTHKLFRNPLPKVIQATPLTLKLR), are a transit peptide targeting the chloroplast. Aspartate 345 is a dimethylallyl diphosphate binding site. Mg(2+) contacts are provided by aspartate 345 and aspartate 349. Positions 345 to 349 (DDIYD) match the DDXXD motif motif. Residues glutamate 423, arginine 486, and asparagine 489 each contribute to the dimethylallyl diphosphate site. Asparagine 489, serine 493, and glutamate 497 together coordinate Mg(2+).

Belongs to the terpene synthase family. Tpsb subfamily. Mg(2+) is required as a cofactor. Mn(2+) serves as cofactor.

Its subcellular location is the plastid. The protein localises to the chloroplast. The catalysed reaction is dimethylallyl diphosphate = isoprene + diphosphate. Lyase that catalyzes the formation of isoprene from dimethylallyl diphosphate. The polypeptide is Isoprene synthase, chloroplastic (ISPS) (Populus tremuloides (Quaking aspen)).